A 163-amino-acid chain; its full sequence is R-phycoerythrin alpha chain (163 aa).

C82 and C139 together coordinate (2R,3E)-phycoerythrobilin.

This sequence belongs to the phycobiliprotein family. In terms of assembly, heterodimer of an alpha and a beta chain. Post-translationally, contains two covalently linked bilin chromophores.

The protein localises to the plastid. The protein resides in the chloroplast thylakoid membrane. Light-harvesting photosynthetic bile pigment-protein from the phycobiliprotein complex. The protein is R-phycoerythrin alpha chain (cpeA) of Aglaothamnion neglectum (Red alga).